A 262-amino-acid chain; its full sequence is Diaminopimelate epimerase (262 aa).

3 residues coordinate substrate: Asn17, Gln45, and Asn63. Catalysis depends on Cys72, which acts as the Proton donor. Substrate is bound by residues 73–74 (GN), Asn154, Asn187, and 205–206 (ER). The active-site Proton acceptor is Cys214. 215–216 (GS) is a binding site for substrate.

It belongs to the diaminopimelate epimerase family. Homodimer.

The protein localises to the cytoplasm. The catalysed reaction is (2S,6S)-2,6-diaminopimelate = meso-2,6-diaminopimelate. Its pathway is amino-acid biosynthesis; L-lysine biosynthesis via DAP pathway; DL-2,6-diaminopimelate from LL-2,6-diaminopimelate: step 1/1. Its function is as follows. Catalyzes the stereoinversion of LL-2,6-diaminopimelate (L,L-DAP) to meso-diaminopimelate (meso-DAP), a precursor of L-lysine and an essential component of the bacterial peptidoglycan. This is Diaminopimelate epimerase from Wolbachia sp. subsp. Drosophila simulans (strain wRi).